A 263-amino-acid polypeptide reads, in one-letter code: Methylesterase 18 (263 aa).

Ser80 serves as the catalytic Acyl-ester intermediate. Catalysis depends on charge relay system residues Asp212 and His240.

It belongs to the AB hydrolase superfamily. Methylesterase family.

The catalysed reaction is methyl (indol-3-yl)acetate + H2O = (indol-3-yl)acetate + methanol + H(+). The protein operates within plant hormone biosynthesis. In terms of biological role, methylesterase shown to have methyl indole-3-acetic acid (MeIAA) esterase activity in vitro. The protein is Methylesterase 18 of Arabidopsis thaliana (Mouse-ear cress).